We begin with the raw amino-acid sequence, 1377 residues long: MDTSSVGGLELTDQTPVLLGSTAMATSLTNVGNSFSGPANPLVSRSNKFQNSSVEDDDDVVFIEPVQPPPPSVPVVADQRTITFTSSKNEELQGNDSKITPSSKELASQKGSVSETIVIDDEEDMETNQGQEKNSSNFIERRPPETKNRTNDVDFSTSSFSRSKVNAGMGNSGITTEPDSEIQIANVTTLETGVSSVNDGQLENTDGRDMNLMITHVTSLQNTNLGDVSNGLQSSNFGVNIQTYTPSLTSQTKTGVGPFNPGRMNVAGDVFQNGESATHHNPDSWISQSASFPRNQKQPGVDSLSPVASLPKQIFQPSVQQQPTKPVKVTCANCKKPLQKGQTAYQRKGSAHLFCSTTCLSSFSHKPAPKKLCVMCKKDITTMKGTIVAQVDSSESFQEFCSTSCLSLYEDKQNPTKGALNKSRCTICGKLTEIRHEVSFKNMTHKLCSDHCFNRYRMANGLIMNCCEQCGEYLPSKGAGNNVLVIDGQQKRFCCQSCVSEYKQVGSHPSFLKEVRDHMQDSFLMQPEKYGKLTTCTGCRTQCRFFDMTQCIGPNGYMEPYCSTACMNSHKTKYAKSQSLGIICHFCKRNSLPQYQATMPDGKLYNFCNSSCVAKFQALSMQSSPNGQFVAPSDIQLKCNYCKNSFCSKPEILEWENKVHQFCSKTCSDDYKKLHCIVTYCEYCQEEKTLHETVNFSGVKRPFCSEGCKLLYKQDFARRLGLRCVTCNYCSQLCKKGATKELDGVVRDFCSEDCCKKFQDWYYKAARCDCCKSQGTLKERVQWRGEMKHFCDQHCLLRFYCQQNEPNMTTQKGPENLHYDQGCQTSRTKMTGSAPPPSPTPNKEMKNKAVLCKPLTMTKATYCKPHMQTKSCQTDDTWRTEYVPVPIPVPVYIPVPMHMYSQNIPVPTTVPVPVPVPVFLPAPLDSSEKIPAAIEELKSKVSSDALDTELLTMTDMMSEDEGKTETTNINSVIIETDIIGSDLLKNSDPETQSSMPDVPYEPDLDIEIDFPRAAEELDMENEFLLPPVFGEEYEEQPRPRSKKKGAKRKAVSGYQSHDDSSDNSECSFPFKYTYGVNAWKHWVKTRQLDEDLLVLDELKSSKSVKLKEDLLSHTTAELNYGLAHFVNEIRRPNGENYAPDSIYYLCLGIQEYLCGSNRKDNIFIDPGYQTFEQELNKILRSWQPSILPDGSIFSRVEEDYLWRIKQLGSHSPVALLNTLFYFNTKYFGLKTVEQHLRLSFGTVFRHWKKNPLTMENKACLRYQVSSLCGTDNEDKITTGKRKHEDDEPVFEQIENTANPSRCPVKMFECYLSKSPQNLNQRMDVFYLQPECSSSTDSPVWYTSTSLDRNTLENMLVRVLLVKDIYDKDNYELDEDTD.

Residues K48, K88, K98, and K104 each participate in a glycyl lysine isopeptide (Lys-Gly) (interchain with G-Cter in SUMO2) cross-link. Composition is skewed to polar residues over residues 85-115 (TSSK…SVSE) and 127-138 (TNQGQEKNSSNF). The segment at 85–177 (TSSKNEELQG…GMGNSGITTE (93 aa)) is disordered. Residues 139–152 (IERRPPETKNRTND) show a composition bias toward basic and acidic residues. Residue K147 forms a Glycyl lysine isopeptide (Lys-Gly) (interchain with G-Cter in SUMO2) linkage. Positions 153-164 (VDFSTSSFSRSK) are enriched in polar residues. A Phosphoserine modification is found at S159. Glycyl lysine isopeptide (Lys-Gly) (interchain with G-Cter in SUMO2) cross-links involve residues K253 and K297. The disordered stretch occupies residues 273–305 (NGESATHHNPDSWISQSASFPRNQKQPGVDSLS). The segment covering 284-298 (SWISQSASFPRNQKQ) has biased composition (polar residues). S305 is subject to Phosphoserine. Residues K312, K325, K348, and K366 each participate in a glycyl lysine isopeptide (Lys-Gly) (interchain with G-Cter in SUMO2) cross-link. The MYM-type 1 zinc finger occupies 327–363 (VKVTCANCKKPLQKGQTAYQRKGSAHLFCSTTCLSSF). An MYM-type 2 zinc finger spans residues 369-409 (PKKLCVMCKKDITTMKGTIVAQVDSSESFQEFCSTSCLSLY). Glycyl lysine isopeptide (Lys-Gly) (interchain with G-Cter in SUMO2) cross-links involve residues K417, K441, K491, K503, K513, K529, and K532. 2 consecutive MYM-type zinc fingers follow at residues 421 to 456 (NKSR…FNRY) and 463 to 502 (IMNC…VSEY). The MYM-type 5 zinc finger occupies 533-570 (LTTCTGCRTQCRFFDMTQCIGPNGYMEPYCSTACMNSH). Residues K576, K603, K649, K658, K688, K700, and K709 each participate in a glycyl lysine isopeptide (Lys-Gly) (interchain with G-Cter in SUMO2) cross-link. The segment at 636-671 (QLKCNYCKNSFCSKPEILEWENKVHQFCSKTCSDDY) adopts an MYM-type 6 zinc-finger fold. 2 consecutive MYM-type zinc fingers follow at residues 723 to 758 (RCVT…CKKF) and 764 to 799 (KAAR…LLRF). Glycyl lysine isopeptide (Lys-Gly) (interchain with G-Cter in SUMO2) cross-links involve residues K764, K788, K812, and K829. 2 positions are modified to phosphoserine: S838 and S958. Disordered stretches follow at residues 983–1002 (LLKN…PYEP) and 1028–1064 (VFGE…SDNS). Over residues 1039 to 1050 (PRSKKKGAKRKA) the composition is skewed to basic residues. The residue at position 1064 (S1064) is a Phosphoserine. Position 1376 is a phosphothreonine (T1376).

In terms of assembly, can form homodimers. May be a component of a BHC histone deacetylase complex that contains HDAC1, HDAC2, HMG20B/BRAF35, KDM1A, RCOR1/CoREST, PHF21A/BHC80, ZMYM2, ZNF217, ZMYM3, GSE1 and GTF2I. Interacts with FOXP1 and FOXP2.

Its subcellular location is the nucleus. Its function is as follows. Involved in the negative regulation of transcription. The sequence is that of Zinc finger MYM-type protein 2 (ZMYM2) from Homo sapiens (Human).